The sequence spans 181 residues: ATP synthase subunit delta (181 aa).

The protein belongs to the ATPase delta chain family. In terms of assembly, F-type ATPases have 2 components, F(1) - the catalytic core - and F(0) - the membrane proton channel. F(1) has five subunits: alpha(3), beta(3), gamma(1), delta(1), epsilon(1). F(0) has three main subunits: a(1), b(2) and c(10-14). The alpha and beta chains form an alternating ring which encloses part of the gamma chain. F(1) is attached to F(0) by a central stalk formed by the gamma and epsilon chains, while a peripheral stalk is formed by the delta and b chains.

It is found in the cell inner membrane. In terms of biological role, f(1)F(0) ATP synthase produces ATP from ADP in the presence of a proton or sodium gradient. F-type ATPases consist of two structural domains, F(1) containing the extramembraneous catalytic core and F(0) containing the membrane proton channel, linked together by a central stalk and a peripheral stalk. During catalysis, ATP synthesis in the catalytic domain of F(1) is coupled via a rotary mechanism of the central stalk subunits to proton translocation. Its function is as follows. This protein is part of the stalk that links CF(0) to CF(1). It either transmits conformational changes from CF(0) to CF(1) or is implicated in proton conduction. This is ATP synthase subunit delta from Cupriavidus taiwanensis (strain DSM 17343 / BCRC 17206 / CCUG 44338 / CIP 107171 / LMG 19424 / R1) (Ralstonia taiwanensis (strain LMG 19424)).